An 850-amino-acid polypeptide reads, in one-letter code: MGKIQKKHGKGRLDHYYRLAKEKGYRARSSFKIIQINQKYGKFLEKSKVVIDLCAAPGSWCQVASQLCPVNSLIIGCDIVPIKPLPNVITFQSDITTDHCRQQLRQYMKTWKADTVMHDGAPNVGMAWAQDAFTQSELVLQSLKLAVEFLNKGGTFVTKVFRSKDYNNLMWVFQQFFEKVEATKPPSSRNVSAEIFVVCLKFKAPKKIDPRLLDAKYVFEEVSQGNNNNEAKVFNPEVKRRKREGYEEGEYLQHKRLSILDFITDSTPIDNLGETNEMTWTPRSIKEGEVDEEEEKEKDKEARDERGNVQYVLDDKVYSDEDALKMVSKLPQTTPELLECLKDLKVLGRKEFRAILKWRLSARDLLQIDKPEAGVEVEEEELDEDQLIDKELSELGEREKARKKRERRRRNEMKQREIQRMQMNMTTPTELGIEAAKMESLFNLKQAERTGKLSELQKGKRSHVSETGDEHVTLEEAERVDYGSDDEANGLEDELESMYTEYLENKAARTAKSVVQRKKANVETEEWFGISDKKDGDESDGEMSADDVDMATIDDGEDEDDGKTARTLNNGNMFFSNPIFDNLVNAAVAKTEAKPKALDLLEPGAKDLIELEKAKKRKYAKKNGLEYSDSEDEEDDIVMETQKQDDSDIEYVHGESDSDDEPNIDLVTDQAMTMAHQLATGQTNKHKLQDDGYNRYSFRDLDGLPQWFQDDENKHNKLNKPITKEAVEALKQKMKTLNARPIKKVLEAKGRKKMRALRRLEQMKKKSELINEDGARSEKEKADDISKLMRKLAKPQKSKKKTVTVVYAGGKNKGIAGRPRGVTGKYKMVDGTMKKEQRAIRRIKKKMGKK.

S-adenosyl-L-methionine contacts are provided by glycine 58, tryptophan 60, aspartate 78, aspartate 94, and aspartate 119. The active-site Proton acceptor is the lysine 159. Residues 273–282 (GETNEMTWTP) are compositionally biased toward polar residues. 4 disordered regions span residues 273–305 (GETN…ARDE), 388–414 (IDKE…NEMK), 529–569 (GISD…RTLN), and 620–646 (AKKN…KQDD). Residues 388–400 (IDKELSELGEREK) are compositionally biased toward basic and acidic residues. A coiled-coil region spans residues 397-425 (EREKARKKRERRRRNEMKQREIQRMQMNM). The segment covering 401–411 (ARKKRERRRRN) has biased composition (basic residues). 2 stretches are compositionally biased toward acidic residues: residues 537 to 561 (DESD…DEDD) and 628 to 638 (SDSEDEEDDIV). Residues 746–773 (LEAKGRKKMRALRRLEQMKKKSELINED) adopt a coiled-coil conformation. The segment at 811 to 850 (KNKGIAGRPRGVTGKYKMVDGTMKKEQRAIRRIKKKMGKK) is disordered. Over residues 840 to 850 (IRRIKKKMGKK) the composition is skewed to basic residues.

Belongs to the class I-like SAM-binding methyltransferase superfamily. RNA methyltransferase RlmE family. SPB1 subfamily. In terms of assembly, component of the nucleolar and nucleoplasmic pre-60S ribosomal particle.

It localises to the nucleus. It is found in the nucleolus. The catalysed reaction is a ribonucleotide in rRNA + S-adenosyl-L-methionine = a 2'-O-methylribonucleotide in rRNA + S-adenosyl-L-homocysteine + H(+). Functionally, required for proper assembly of pre-ribosomal particles during the biogenesis of the 60S ribosomal subunit. The protein is AdoMet-dependent rRNA methyltransferase SPB1 of Yarrowia lipolytica (strain CLIB 122 / E 150) (Yeast).